Consider the following 160-residue polypeptide: Cyanate hydratase (160 aa).

Residues Arg100, Glu103, and Ser126 contribute to the active site.

This sequence belongs to the cyanase family.

The enzyme catalyses cyanate + hydrogencarbonate + 3 H(+) = NH4(+) + 2 CO2. Functionally, catalyzes the reaction of cyanate with bicarbonate to produce ammonia and carbon dioxide. The polypeptide is Cyanate hydratase (Aspergillus niger (strain ATCC MYA-4892 / CBS 513.88 / FGSC A1513)).